The chain runs to 512 residues: Sucrose-6-phosphate hydrolase (512 aa).

Substrate-binding positions include 40–43, Gln59, Trp67, 102–103, 165–166, Glu229, and Trp311; these read WMND, FS, and RD. Residue Asp43 is part of the active site.

This sequence belongs to the glycosyl hydrolase 32 family.

It localises to the cytoplasm. It carries out the reaction Hydrolysis of terminal non-reducing beta-D-fructofuranoside residues in beta-D-fructofuranosides.. The protein operates within glycan biosynthesis; sucrose metabolism. This chain is Sucrose-6-phosphate hydrolase (sacA), found in Zymomonas mobilis subsp. mobilis (strain ATCC 10988 / DSM 424 / LMG 404 / NCIMB 8938 / NRRL B-806 / ZM1).